The following is a 179-amino-acid chain: Large ribosomal subunit protein uL6 (179 aa).

Belongs to the universal ribosomal protein uL6 family. As to quaternary structure, part of the 50S ribosomal subunit.

This protein binds to the 23S rRNA, and is important in its secondary structure. It is located near the subunit interface in the base of the L7/L12 stalk, and near the tRNA binding site of the peptidyltransferase center. The protein is Large ribosomal subunit protein uL6 of Mycobacterium ulcerans (strain Agy99).